The chain runs to 345 residues: Anthranilate phosphoribosyltransferase (345 aa).

5-phospho-alpha-D-ribose 1-diphosphate contacts are provided by residues Gly-84, 87-88 (GD), Thr-92, 94-97 (NIST), 112-120 (KHGNRSVSS), and Ser-124. Position 84 (Gly-84) interacts with anthranilate. Mg(2+) is bound at residue Ser-96. Residue Asn-115 participates in anthranilate binding. Position 170 (Arg-170) interacts with anthranilate. The Mg(2+) site is built by Asp-229 and Glu-230.

Belongs to the anthranilate phosphoribosyltransferase family. Homodimer. Requires Mg(2+) as cofactor.

It catalyses the reaction N-(5-phospho-beta-D-ribosyl)anthranilate + diphosphate = 5-phospho-alpha-D-ribose 1-diphosphate + anthranilate. It participates in amino-acid biosynthesis; L-tryptophan biosynthesis; L-tryptophan from chorismate: step 2/5. In terms of biological role, catalyzes the transfer of the phosphoribosyl group of 5-phosphorylribose-1-pyrophosphate (PRPP) to anthranilate to yield N-(5'-phosphoribosyl)-anthranilate (PRA). The protein is Anthranilate phosphoribosyltransferase of Xanthomonas campestris pv. campestris (strain B100).